We begin with the raw amino-acid sequence, 119 residues long: Large ribosomal subunit protein uL18 (119 aa).

The segment covering 1-10 (MKKIKEAEQR) has biased composition (basic and acidic residues). Residues 1–20 (MKKIKEAEQRKLRRKKRIKD) form a disordered region.

It belongs to the universal ribosomal protein uL18 family. Part of the 50S ribosomal subunit; part of the 5S rRNA/L5/L18/L25 subcomplex. Contacts the 5S and 23S rRNAs.

In terms of biological role, this is one of the proteins that bind and probably mediate the attachment of the 5S RNA into the large ribosomal subunit, where it forms part of the central protuberance. In Borreliella burgdorferi (strain ATCC 35210 / DSM 4680 / CIP 102532 / B31) (Borrelia burgdorferi), this protein is Large ribosomal subunit protein uL18.